The sequence spans 216 residues: Ribosomal RNA large subunit methyltransferase E (216 aa).

Glycine 71, tryptophan 73, aspartate 88, aspartate 104, and aspartate 126 together coordinate S-adenosyl-L-methionine. Lysine 166 functions as the Proton acceptor in the catalytic mechanism.

It belongs to the class I-like SAM-binding methyltransferase superfamily. RNA methyltransferase RlmE family.

It localises to the cytoplasm. The enzyme catalyses uridine(2552) in 23S rRNA + S-adenosyl-L-methionine = 2'-O-methyluridine(2552) in 23S rRNA + S-adenosyl-L-homocysteine + H(+). Its function is as follows. Specifically methylates the uridine in position 2552 of 23S rRNA at the 2'-O position of the ribose in the fully assembled 50S ribosomal subunit. The sequence is that of Ribosomal RNA large subunit methyltransferase E from Wolbachia sp. subsp. Brugia malayi (strain TRS).